The chain runs to 298 residues: MAVSARDYWDLTKPKVVALIVFTALVGMFLAIPGMPTWLQVRTGALGFLGIWLAASAAAAINQLLDAKIDAQMARTSWRPLVVGKVRPAQVLAFASVLIVISMTILVVWVNVITAVLTFASLIGYAVIYTVYLKRATSQNIVIGGLAGATPPMLGWAAVTGLPTSADWINASLLVLIIFIWTPPHFWALAIFRRADYAKAAIPMLPVTHGVPHTRKQILVYTVLLAIVTLLPVAVGMSGVFYLGGAVVLNAVFLWYAWRMLDPPDELFSMKMFGYSVVYLMALFAFLMVDHLLLPWVR.

Transmembrane regions (helical) follow at residues 16–36 (VVAL…PGMP), 45–65 (ALGF…NQLL), 97–117 (VLIV…TAVL), 141–161 (IVIG…AVTG), 172–192 (SLLV…LAIF), 223–243 (VLLA…VFYL), 244–264 (GGAV…LDPP), and 277–297 (VVYL…LPWV).

It belongs to the UbiA prenyltransferase family. Protoheme IX farnesyltransferase subfamily.

It is found in the cell inner membrane. The catalysed reaction is heme b + (2E,6E)-farnesyl diphosphate + H2O = Fe(II)-heme o + diphosphate. Its pathway is porphyrin-containing compound metabolism; heme O biosynthesis; heme O from protoheme: step 1/1. Its function is as follows. Converts heme B (protoheme IX) to heme O by substitution of the vinyl group on carbon 2 of heme B porphyrin ring with a hydroxyethyl farnesyl side group. In Xanthomonas campestris pv. campestris (strain 8004), this protein is Protoheme IX farnesyltransferase.